Consider the following 177-residue polypeptide: MSRKSGSRSSSKRSKKSGGGSNVFDMFTQRQVAEFKEGFQLMDRDKDGVIGKTDLRGTFDEIGRIATDQELDEMLADAPAPINFTMLLNMFAERQTGESDDDDVVAKAFLAFADEEGNIDCDTFRHALMTWGDKFSSQEADDALDQMDIDDGGKIDVQGVIQMLTAGGGDDAAAEEA.

Residues 1–16 (MSRKSGSRSSSKRSKK) are compositionally biased toward basic residues. Residues 1–24 (MSRKSGSRSSSKRSKKSGGGSNVF) form a disordered region. IgE-binding epitope regions lie at residues 13–30 (RSKK…FTQR), 22–48 (NVFD…DKDG), 49–66 (VIGK…GRIA), 58–90 (TFDE…LLNM), 79–99 (PAPI…TGES), and 118–141 (NIDC…QEAD). The EF-hand 1 domain occupies 30–65 (RQVAEFKEGFQLMDRDKDGVIGKTDLRGTFDEIGRI). Residues aspartate 43, aspartate 45, aspartate 47, and aspartate 54 each coordinate Ca(2+). In terms of domain architecture, EF-hand 2 spans 135-170 (FSSQEADDALDQMDIDDGGKIDVQGVIQMLTAGGGD).

In terms of assembly, myosin is a hexamer of 2 heavy chains and 4 light chains. As to expression, expressed in tail muscle (at protein level).

The chain is Myosin regulatory light chain 2 from Penaeus vannamei (Whiteleg shrimp).